A 122-amino-acid chain; its full sequence is Large ribosomal subunit protein uL14 (122 aa).

This sequence belongs to the universal ribosomal protein uL14 family. In terms of assembly, part of the 50S ribosomal subunit. Forms a cluster with proteins L3 and L19. In the 70S ribosome, L14 and L19 interact and together make contacts with the 16S rRNA in bridges B5 and B8.

In terms of biological role, binds to 23S rRNA. Forms part of two intersubunit bridges in the 70S ribosome. This is Large ribosomal subunit protein uL14 from Pseudoalteromonas translucida (strain TAC 125).